The chain runs to 143 residues: Large ribosomal subunit protein uL11 (143 aa).

Belongs to the universal ribosomal protein uL11 family. As to quaternary structure, part of the ribosomal stalk of the 50S ribosomal subunit. Interacts with L10 and the large rRNA to form the base of the stalk. L10 forms an elongated spine to which L12 dimers bind in a sequential fashion forming a multimeric L10(L12)X complex. Post-translationally, one or more lysine residues are methylated.

Functionally, forms part of the ribosomal stalk which helps the ribosome interact with GTP-bound translation factors. The sequence is that of Large ribosomal subunit protein uL11 from Paraburkholderia xenovorans (strain LB400).